A 431-amino-acid chain; its full sequence is Adenylosuccinate lyase (431 aa).

N(6)-(1,2-dicarboxyethyl)-AMP contacts are provided by residues 4–5 (RY), 67–69 (RHD), and 93–94 (TS). The Proton donor/acceptor role is filled by H141. Position 212 (Q212) interacts with N(6)-(1,2-dicarboxyethyl)-AMP. The active-site Proton donor/acceptor is S262. N(6)-(1,2-dicarboxyethyl)-AMP is bound by residues S263, 268–270 (KRN), N276, and 307–311 (SAERI).

This sequence belongs to the lyase 1 family. Adenylosuccinate lyase subfamily. As to quaternary structure, homodimer and homotetramer. Residues from neighboring subunits contribute catalytic and substrate-binding residues to each active site.

The catalysed reaction is N(6)-(1,2-dicarboxyethyl)-AMP = fumarate + AMP. It carries out the reaction (2S)-2-[5-amino-1-(5-phospho-beta-D-ribosyl)imidazole-4-carboxamido]succinate = 5-amino-1-(5-phospho-beta-D-ribosyl)imidazole-4-carboxamide + fumarate. It functions in the pathway purine metabolism; AMP biosynthesis via de novo pathway; AMP from IMP: step 2/2. The protein operates within purine metabolism; IMP biosynthesis via de novo pathway; 5-amino-1-(5-phospho-D-ribosyl)imidazole-4-carboxamide from 5-amino-1-(5-phospho-D-ribosyl)imidazole-4-carboxylate: step 2/2. Functionally, catalyzes two reactions in de novo purine nucleotide biosynthesis. Catalyzes the breakdown of 5-aminoimidazole- (N-succinylocarboxamide) ribotide (SAICAR or 2-[5-amino-1-(5-phospho-beta-D-ribosyl)imidazole-4-carboxamido]succinate) to 5-aminoimidazole-4-carboxamide ribotide (AICAR or 5-amino-1-(5-phospho-beta-D-ribosyl)imidazole-4-carboxamide) and fumarate, and of adenylosuccinate (ADS or N(6)-(1,2-dicarboxyethyl)-AMP) to adenosine monophosphate (AMP) and fumarate. This is Adenylosuccinate lyase (purB) from Staphylococcus aureus (strain USA300).